The chain runs to 487 residues: Probable glycine dehydrogenase (decarboxylating) subunit 2 (487 aa).

Lys-269 is subject to N6-(pyridoxal phosphate)lysine.

It belongs to the GcvP family. C-terminal subunit subfamily. As to quaternary structure, the glycine cleavage system is composed of four proteins: P, T, L and H. In this organism, the P 'protein' is a heterodimer of two subunits. Requires pyridoxal 5'-phosphate as cofactor.

The enzyme catalyses N(6)-[(R)-lipoyl]-L-lysyl-[glycine-cleavage complex H protein] + glycine + H(+) = N(6)-[(R)-S(8)-aminomethyldihydrolipoyl]-L-lysyl-[glycine-cleavage complex H protein] + CO2. Functionally, the glycine cleavage system catalyzes the degradation of glycine. The P protein binds the alpha-amino group of glycine through its pyridoxal phosphate cofactor; CO(2) is released and the remaining methylamine moiety is then transferred to the lipoamide cofactor of the H protein. The protein is Probable glycine dehydrogenase (decarboxylating) subunit 2 of Prosthecochloris aestuarii (strain DSM 271 / SK 413).